The primary structure comprises 484 residues: tRNA sulfurtransferase (484 aa).

Positions 61 to 165 (TLLVELLGRI…NDKMMLIKAR (105 aa)) constitute a THUMP domain. Residues 183-184 (LI), Lys-265, Gly-287, and Gln-296 each bind ATP. The cysteines at positions 344 and 456 are disulfide-linked. A Rhodanese domain is found at 404 to 484 (LSANEVILDI…DNVKVLNKIS (81 aa)). Cys-456 functions as the Cysteine persulfide intermediate in the catalytic mechanism.

This sequence belongs to the ThiI family.

Its subcellular location is the cytoplasm. It carries out the reaction [ThiI sulfur-carrier protein]-S-sulfanyl-L-cysteine + a uridine in tRNA + 2 reduced [2Fe-2S]-[ferredoxin] + ATP + H(+) = [ThiI sulfur-carrier protein]-L-cysteine + a 4-thiouridine in tRNA + 2 oxidized [2Fe-2S]-[ferredoxin] + AMP + diphosphate. The catalysed reaction is [ThiS sulfur-carrier protein]-C-terminal Gly-Gly-AMP + S-sulfanyl-L-cysteinyl-[cysteine desulfurase] + AH2 = [ThiS sulfur-carrier protein]-C-terminal-Gly-aminoethanethioate + L-cysteinyl-[cysteine desulfurase] + A + AMP + 2 H(+). It participates in cofactor biosynthesis; thiamine diphosphate biosynthesis. Functionally, catalyzes the ATP-dependent transfer of a sulfur to tRNA to produce 4-thiouridine in position 8 of tRNAs, which functions as a near-UV photosensor. Also catalyzes the transfer of sulfur to the sulfur carrier protein ThiS, forming ThiS-thiocarboxylate. This is a step in the synthesis of thiazole, in the thiamine biosynthesis pathway. The sulfur is donated as persulfide by IscS. This is tRNA sulfurtransferase from Histophilus somni (strain 2336) (Haemophilus somnus).